A 332-amino-acid polypeptide reads, in one-letter code: 4-hydroxy-3-methylbut-2-enyl diphosphate reductase (332 aa).

Residue cysteine 34 participates in [4Fe-4S] cluster binding. (2E)-4-hydroxy-3-methylbut-2-enyl diphosphate is bound by residues histidine 63 and histidine 96. Dimethylallyl diphosphate contacts are provided by histidine 63 and histidine 96. Positions 63 and 96 each coordinate isopentenyl diphosphate. [4Fe-4S] cluster is bound at residue cysteine 118. Histidine 146 is a (2E)-4-hydroxy-3-methylbut-2-enyl diphosphate binding site. A dimethylallyl diphosphate-binding site is contributed by histidine 146. Residue histidine 146 coordinates isopentenyl diphosphate. Glutamate 148 functions as the Proton donor in the catalytic mechanism. Residue threonine 186 participates in (2E)-4-hydroxy-3-methylbut-2-enyl diphosphate binding. Cysteine 216 contacts [4Fe-4S] cluster. Residues serine 244, serine 245, asparagine 246, and serine 289 each coordinate (2E)-4-hydroxy-3-methylbut-2-enyl diphosphate. Residues serine 244, serine 245, asparagine 246, and serine 289 each coordinate dimethylallyl diphosphate. Residues serine 244, serine 245, asparagine 246, and serine 289 each coordinate isopentenyl diphosphate.

Belongs to the IspH family. The cofactor is [4Fe-4S] cluster.

The enzyme catalyses isopentenyl diphosphate + 2 oxidized [2Fe-2S]-[ferredoxin] + H2O = (2E)-4-hydroxy-3-methylbut-2-enyl diphosphate + 2 reduced [2Fe-2S]-[ferredoxin] + 2 H(+). It carries out the reaction dimethylallyl diphosphate + 2 oxidized [2Fe-2S]-[ferredoxin] + H2O = (2E)-4-hydroxy-3-methylbut-2-enyl diphosphate + 2 reduced [2Fe-2S]-[ferredoxin] + 2 H(+). It participates in isoprenoid biosynthesis; dimethylallyl diphosphate biosynthesis; dimethylallyl diphosphate from (2E)-4-hydroxy-3-methylbutenyl diphosphate: step 1/1. It functions in the pathway isoprenoid biosynthesis; isopentenyl diphosphate biosynthesis via DXP pathway; isopentenyl diphosphate from 1-deoxy-D-xylulose 5-phosphate: step 6/6. Catalyzes the conversion of 1-hydroxy-2-methyl-2-(E)-butenyl 4-diphosphate (HMBPP) into a mixture of isopentenyl diphosphate (IPP) and dimethylallyl diphosphate (DMAPP). Acts in the terminal step of the DOXP/MEP pathway for isoprenoid precursor biosynthesis. In Mycobacterium ulcerans (strain Agy99), this protein is 4-hydroxy-3-methylbut-2-enyl diphosphate reductase.